Here is a 549-residue protein sequence, read N- to C-terminus: Lipase 1 (549 aa).

Positions 1–15 (MELALALSLIASVAA) are cleaved as a signal peptide. Cysteine 75 and cysteine 112 are joined by a disulfide. Serine 224 functions as the Acyl-ester intermediate in the catalytic mechanism. Cysteine 283 and cysteine 292 form a disulfide bridge. N-linked (GlcNAc...) asparagine glycosylation is present at asparagine 329. Glutamate 356 acts as the Charge relay system in catalysis. Asparagine 366 carries an N-linked (GlcNAc...) asparagine glycan. Catalysis depends on histidine 464, which acts as the Charge relay system.

The protein belongs to the type-B carboxylesterase/lipase family.

The enzyme catalyses a triacylglycerol + H2O = a diacylglycerol + a fatty acid + H(+). The sequence is that of Lipase 1 (LIP1) from Diutina rugosa (Yeast).